We begin with the raw amino-acid sequence, 4080 residues long: Hybrid PKS-NRPS synthetase poxE (4080 aa).

One can recognise a Ketosynthase family 3 (KS3) domain in the interval 8 to 442 (REPIAIVGSG…GTNAHAIIEA (435 aa)). Residues C181, H320, and H362 each act as for beta-ketoacyl synthase activity in the active site. The tract at residues 554–878 (VFTGQGAQWA…QRGMNDVEAM (325 aa)) is malonyl-CoA:ACP transacylase (MAT) domain. Residues 944–1078 (HPILGTRCPD…GRLVITYGPV (135 aa)) form an N-terminal hotdog fold region. Residues 944 to 1246 (HPILGTRCPD…AVPLEATNAD (303 aa)) enclose the PKS/mFAS DH domain. A dehydratase (DH) domain region spans residues 945 to 1243 (PILGTRCPDG…GIHAVPLEAT (299 aa)). H976 functions as the Proton acceptor; for dehydratase activity in the catalytic mechanism. Positions 1093–1246 (MVDVPSERFY…AVPLEATNAD (154 aa)) are C-terminal hotdog fold. D1152 serves as the catalytic Proton donor; for dehydratase activity. Residues 1400–1585 (HFSDYLASVV…GVDTFTSDAD (186 aa)) form a methyltransferase (MT) domain region. Residues 2118–2292 (TYWLVGLTGS…AGSVMNIGAI (175 aa)) are ketoreductase (KR)domain. Residues 2399–2478 (TTDEIYEVIK…TIGEIIKFVL (80 aa)) form a peptidyl carrier protein region. Residues 2405 to 2481 (EVIKECFIVK…EIIKFVLEKL (77 aa)) form the Carrier 1 domain. S2441 is modified (O-(pantetheine 4'-phosphoryl)serine). The segment at 2488-2569 (SLGLSPPTGA…AASPSIHTEE (82 aa)) is disordered. A compositionally biased stretch (basic and acidic residues) spans 2511-2525 (VVVERRNVPRLEKKI). Residues 2528-2545 (SAGSRTSSSVTGTSKSVS) show a composition bias toward low complexity. Positions 2551 to 2565 (DTASSQTSEAASPSI) are enriched in polar residues. The tract at residues 2607–3036 (KEPLSFGQSR…DSKQPGGHVS (430 aa)) is condensation. The segment at 3069 to 3478 (DMAKQYPQKL…DGRLRIEGRI (410 aa)) is adenylation. Residues 3593 to 3673 (AHLNEAQAQM…KMALLIKPQE (81 aa)) form the Carrier 2 domain. Positions 3598-3670 (AQAQMVQLWE…TLEKMALLIK (73 aa)) are thiolation. S3633 carries the O-(pantetheine 4'-phosphoryl)serine modification. Residues 3740 to 3959 (LTGATGFIGQ…DFVPVEQVVR (220 aa)) are reductase (RED) domain.

This sequence in the C-terminal section; belongs to the NRP synthetase family.

The protein operates within secondary metabolite biosynthesis. Hybrid PKS-NRPS synthetase; part of the gene cluster that mediates the biosynthesis of oxaleimides, cytotoxic compounds containing an unusual disubstituted succinimide moiety. The first step of the pathway is provided by the HR-PKS poxF that serves in a new mode of collaborative biosynthesis with the PKS-NRPS poxE, by providing the olefin containing amino acid substrate via the synthesis of an ACP-bound dec-4-enoate. The cytochrome P450 monooxygenase poxM-catalyzed oxidation at the alpha-position creates the enzyme-bound 2-hydroxydec-4-enoyl-ACP thioester, which may be prone to spontaneous hydrolysis to yield 2-hydroxydec-4-enoic acid due to increased electrophilicity of the carbonyl. 2-hydroxydec-4-enoic acid can then be further oxidized by poxM to yield the alpha-ketoacid 2-oxodec-4-enoicacid, which is reductively aminated by the aminotransferase poxL to yield (S,E)-2-aminodec-4-enoic acid. The Hybrid PKS-NRPS synthetase poxE then performs condensation between the octaketide product of its PKS modules and the amino group of (S,E)-2-aminodec-4-enoic acid which is activated and incorporated by the adenylation domain. The resulting aminoacyl product can be cyclized by the Diels-Alderase PoxQ and reductively released by the reductive (R) domain of poxE to yield an aldehyde intermediate. The released aldehyde is then substrate for a Knoevenagel condensation by the hydrolyase poxO followed by an oxidation at the 5-position of the pyrrolidone ring. The presence of the olefin from the amino acid building block allows for migration of the substituted allyl group to occur. This allylic transposition reaction takes place in a conjugate addition, semipinacol-like fashion to yield a succinimide intermediate. Iterative two-electron oxidations of the C7 methyl of the succinimide intermediate to the carboxylic acid can be catalyzed by one of two remaining cytochrome P450 monooxygenasess poxC or poxD to yield oxaleimide A. Subsequent oxidation yields the maleimide scaffold oxaleimide I. Both oxaleimide A and oxaleimide I can undergo oxidative modifications in the decalin ring to yield the series of products oxaleimides B to H. This chain is Hybrid PKS-NRPS synthetase poxE, found in Penicillium oxalicum.